A 139-amino-acid polypeptide reads, in one-letter code: Putative nickel-responsive regulator (139 aa).

Residues histidine 79, histidine 90, histidine 92, and cysteine 98 each coordinate Ni(2+).

This sequence belongs to the transcriptional regulatory CopG/NikR family. It depends on Ni(2+) as a cofactor.

Functionally, transcriptional regulator. This chain is Putative nickel-responsive regulator, found in Solibacter usitatus (strain Ellin6076).